An 89-amino-acid polypeptide reads, in one-letter code: Large ribosomal subunit protein bL27 (89 aa).

The tract at residues 1–22 (MAHKKAGGSSRNGRDSESKRLG) is disordered.

This sequence belongs to the bacterial ribosomal protein bL27 family.

The sequence is that of Large ribosomal subunit protein bL27 from Bartonella henselae (strain ATCC 49882 / DSM 28221 / CCUG 30454 / Houston 1) (Rochalimaea henselae).